A 565-amino-acid chain; its full sequence is Periplasmic trehalase (565 aa).

The signal sequence occupies residues 1–30; that stretch reads MKSPAPSRPQKMALIPACIFLCFAALSVQA. Substrate is bound by residues R152, 159-160, N196, 205-207, 277-279, and G310; these read WD, RSQ, and RPE. Active-site proton donor/acceptor residues include D312 and E496. E511 serves as a coordination point for substrate. The segment at 539-565 is disordered; the sequence is CDNVPATRPLSESTTQPVKQKEAEPTP.

Belongs to the glycosyl hydrolase 37 family. Monomer.

It localises to the periplasm. The catalysed reaction is alpha,alpha-trehalose + H2O = alpha-D-glucose + beta-D-glucose. Its function is as follows. Provides the cells with the ability to utilize trehalose at high osmolarity by splitting it into glucose molecules that can subsequently be taken up by the phosphotransferase-mediated uptake system. This Escherichia coli O17:K52:H18 (strain UMN026 / ExPEC) protein is Periplasmic trehalase.